The primary structure comprises 553 residues: Thioredoxin domain-containing protein 2 (553 aa).

Disordered regions lie at residues 1 to 37 (MDVD…DANE) and 77 to 442 (TEES…EETM). Residues 99–143 (PKQDDSPKSSEETIQPKEGDIPKAPEETIQSKKEDLPKSSEKAIQ) are compositionally biased toward basic and acidic residues. Tandem repeats lie at residues 113 to 127 (QPKE…EETI), 128 to 142 (QSKK…EKAI), 143 to 157 (QPKE…AKPI), 158 to 172 (QPKL…VKPS), 173 to 187 (QPKE…EETI), 188 to 202 (QSKK…EEAI), 203 to 217 (QPKE…AKPI), 218 to 232 (QPKL…VKPS), 233 to 247 (QPKE…EETI), 248 to 262 (QPKE…AKPI), 263 to 277 (QPKL…VKPS), 278 to 292 (QPKE…EEAI), 293 to 307 (QPKE…EEAI), 308 to 322 (QPKE…EEAI), 323 to 337 (QPKE…EEAI), 338 to 352 (QPKE…EETI), 353 to 367 (QPKK…EEAI), 368 to 382 (QPKE…KQAI), 383 to 397 (QPKE…EEAI), 398 to 412 (PPKE…EETI), 413 to 427 (QPKE…EEAT), and 428 to 442 (PSKE…EETM). A 22 X 15 AA approximate tandem repeat of Q-P-K-X-G-D-I-P-K-S-[PS]-E-[KE]-X-I region spans residues 113 to 442 (QPKEGDIPKA…DILKPEEETM (330 aa)). Over residues 173–209 (QPKEGDIPKAPEETIQSKKEDLPKSSEEAIQPKEGDI) the composition is skewed to basic and acidic residues. The span at 233 to 254 (QPKESDIPKSPEETIQPKEGDI) shows a compositional bias: basic and acidic residues. 2 stretches are compositionally biased toward basic and acidic residues: residues 278–376 (QPKE…DIPK) and 385–439 (KEGD…KPEE). Phosphoserine is present on S362. S392 carries the phosphoserine modification. A Thioredoxin domain is found at 429 to 553 (SKEGDILKPE…KLEAVIAELK (125 aa)). The cysteines at positions 480 and 483 are disulfide-linked.

As to expression, testis-specific. Only expressed during spermiogenesis, prominently in round and elongating spermatids.

The protein resides in the cytoplasm. Functionally, probably plays a regulatory role in sperm development. May participate in regulation of fibrous sheath (FS) assembly by supporting the formation of disulfide bonds during sperm tail morphogenesis. May also be required to rectify incorrect disulfide pairing and generate suitable pairs between the FS constituents. Can reduce disulfide bonds in vitro in the presence of NADP and thioredoxin reductase. This is Thioredoxin domain-containing protein 2 (TXNDC2) from Homo sapiens (Human).